Reading from the N-terminus, the 724-residue chain is Transcription factor dcp-66 (724 aa).

Composition is skewed to polar residues over residues 1 to 12 (MAQVQQVPSSPM) and 56 to 70 (GAST…QLSP). Disordered stretches follow at residues 1–23 (MAQV…GNGL) and 55–129 (NGAS…KRRL). Basic and acidic residues predominate over residues 85 to 95 (AQEKIKLKDDI). The segment covering 105-119 (DDDDMEDEELGDEIN) has biased composition (acidic residues). Residues 186 to 216 (EEQLRERLNMRREAENQLREEEAKLLVLRKM) are a coiled coil. Disordered stretches follow at residues 328–361 (KELS…QITQ) and 523–590 (AAPA…QLQQ). Residues 332-358 (AAETNASASASPAVQQSQQAQQPQQAQ) are compositionally biased toward low complexity. 2 stretches are compositionally biased toward polar residues: residues 527–541 (TSQT…TVSS) and 551–564 (IPSS…TQAV). A compositionally biased stretch (low complexity) spans 565–590 (KTSTPIHSTPKSSSSSAKKTAAQLQQ).

As to expression, expressed at low levels in excretory cell, pharynx, vulva, and posterior neurons in adults. Strongly expressed in the excretory cell and more weakly in the pharynx in larva. Embryonic expression in the excretory cell.

The protein localises to the nucleus. Its function is as follows. Transcription factor which binds to the 5'-CCATACATTA-3' motif found in the promoter region of pgp-12 and activates its expression in the excretory cell. This Caenorhabditis elegans protein is Transcription factor dcp-66.